Consider the following 204-residue polypeptide: Phosphoribosyl-dephospho-CoA transferase (204 aa).

Catalysis depends on residues aspartate 129 and aspartate 131.

This sequence belongs to the MdcG family.

The enzyme catalyses apo-[malonate decarboxylase ACP] + 2'-(5''-triphospho-alpha-D-ribosyl)-3'-dephospho-CoA = holo-[malonate decarboxylase ACP] + diphosphate. Its function is as follows. Transfers 2'-(5-triphosphoribosyl)-3'-dephosphocoenzyme-A to the apo-[acyl-carrier-protein] of the malonate decarboxylase to yield holo-[acyl-carrier-protein]. In Pseudomonas putida (strain GB-1), this protein is Phosphoribosyl-dephospho-CoA transferase.